Here is a 316-residue protein sequence, read N- to C-terminus: Polyprenyl transferase dpchC (316 aa).

8 helical membrane-spanning segments follow: residues 24–44, 60–80, 105–125, 154–174, 192–212, 234–254, 258–278, and 296–316; these read PLFT…AKMA, ALCF…NDWI, EAMV…EVML, MLGI…AVIG, CLPL…AYSY, IHLL…IYLF, SLWL…QQLV, and FILG…TGSA.

It belongs to the UbiA prenyltransferase family. Mg(2+) is required as a cofactor.

The protein localises to the membrane. Its pathway is secondary metabolite biosynthesis; terpenoid biosynthesis. Functionally, polyprenyl transferase; part of the gene cluster that mediates the biosynthesis of the diterpenoid pyrones higginsianins A and B. The first step of the pathway is the synthesis of the alpha-pyrone moiety by the polyketide synthase dpchA via condensation of one acetyl-CoA starter unit with 3 malonyl-CoA units and 2 methylations. The alpha-pyrone is then combined with geranylgeranyl pyrophosphate (GGPP) formed by the GGPP synthase dpchD through the action of the prenyltransferase dpchC to yield a linear alpha-pyrone diterpenoid. Subsequent steps in the diterpenoid pyrone biosynthetic pathway involve the decalin core formation, which is initiated by the epoxidation of the C10-C11 olefin by the FAD-dependent oxidoreductase dpchE, and is followed by a cyclization cascade catalyzed by the terpene cyclase dpchB. The short chain dehydrogenase/reductase dpchG then oxidizes the 8S hydroxy group to a ketone and the short chain dehydrogenase/reductase dpchH reduces the ketone to the 8R hydroxy group to yield higginsianin B. Finally, the FAD-dependent oxidoreductase dpchF converts higginsianin B into higginsianin A. The chain is Polyprenyl transferase dpchC from Colletotrichum higginsianum (strain IMI 349063) (Crucifer anthracnose fungus).